A 630-amino-acid polypeptide reads, in one-letter code: Terpinolene synthase, chloroplastic (630 aa).

The N-terminal 52 residues, 1–52, are a transit peptide targeting the chloroplast; the sequence is MALVSILPLSSKSVLHKSWIVSTYEHKAISRTIPNLGLRGRGKSVTHSLRMS. D381, D385, N525, and D533 together coordinate Mg(2+). The DDXXD motif motif lies at 381–385; sequence DDIYD.

It belongs to the terpene synthase family. Tpsd subfamily. It depends on Mg(2+) as a cofactor. Mn(2+) is required as a cofactor. Requires K(+) as cofactor.

Its subcellular location is the plastid. The protein localises to the chloroplast. It catalyses the reaction (2E)-geranyl diphosphate = terpinolene + diphosphate. The protein operates within terpene metabolism; oleoresin biosynthesis. Involved in defensive oleoresin formation in conifers in response to insect attack or other injury. Involved in monoterpene (C10) olefins biosynthesis. The chain is Terpinolene synthase, chloroplastic (ag9) from Abies grandis (Grand fir).